We begin with the raw amino-acid sequence, 271 residues long: Acyl-[acyl-carrier-protein]--UDP-N-acetylglucosamine O-acyltransferase (271 aa).

It belongs to the transferase hexapeptide repeat family. LpxA subfamily. Homotrimer.

It localises to the cytoplasm. The catalysed reaction is a (3R)-hydroxyacyl-[ACP] + UDP-N-acetyl-alpha-D-glucosamine = a UDP-3-O-[(3R)-3-hydroxyacyl]-N-acetyl-alpha-D-glucosamine + holo-[ACP]. It participates in glycolipid biosynthesis; lipid IV(A) biosynthesis; lipid IV(A) from (3R)-3-hydroxytetradecanoyl-[acyl-carrier-protein] and UDP-N-acetyl-alpha-D-glucosamine: step 1/6. In terms of biological role, involved in the biosynthesis of lipid A, a phosphorylated glycolipid that anchors the lipopolysaccharide to the outer membrane of the cell. The polypeptide is Acyl-[acyl-carrier-protein]--UDP-N-acetylglucosamine O-acyltransferase (Sulfurihydrogenibium sp. (strain YO3AOP1)).